A 490-amino-acid polypeptide reads, in one-letter code: Ribulose bisphosphate carboxylase large chain (490 aa).

Residues Asn-127 and Thr-177 each coordinate substrate. Lys-179 (proton acceptor) is an active-site residue. A substrate-binding site is contributed by Lys-181. Positions 205, 207, and 208 each coordinate Mg(2+). Lys-205 is subject to N6-carboxylysine. His-297 serves as the catalytic Proton acceptor. Substrate contacts are provided by Arg-298, His-330, and Ser-382.

It belongs to the RuBisCO large chain family. Type I subfamily. As to quaternary structure, heterohexadecamer of 8 large chains and 8 small chains. Mg(2+) is required as a cofactor.

The protein localises to the plastid. It is found in the chloroplast. It catalyses the reaction 2 (2R)-3-phosphoglycerate + 2 H(+) = D-ribulose 1,5-bisphosphate + CO2 + H2O. The enzyme catalyses D-ribulose 1,5-bisphosphate + O2 = 2-phosphoglycolate + (2R)-3-phosphoglycerate + 2 H(+). In terms of biological role, ruBisCO catalyzes two reactions: the carboxylation of D-ribulose 1,5-bisphosphate, the primary event in carbon dioxide fixation, as well as the oxidative fragmentation of the pentose substrate in the photorespiration process. Both reactions occur simultaneously and in competition at the same active site. The protein is Ribulose bisphosphate carboxylase large chain of Thalassiosira nordenskioeldii (Marine diatom).